Here is a 301-residue protein sequence, read N- to C-terminus: Protoheme IX farnesyltransferase (301 aa).

8 helical membrane passes run 30–50 (VISLLDLAAIAGFVLGLPKAI), 55–75 (IIVSFLAVIIGGSLASGGGMI), 106–126 (AYAIGSIFIVVGTLIGFLANP), 127–147 (LTALFIALGAFIYVVIYSIWL), 152–172 (WWNIVIGGFAGSAAAWAGFAA), 177–197 (FTLLSFLLGFLIFMWTPGHFW), 233–253 (ALMVPFALLIGLYAGLIYLIV), and 281–301 (FKLSSPYLAIILLTLIIVKLI).

It belongs to the UbiA prenyltransferase family. Protoheme IX farnesyltransferase subfamily.

It is found in the cell membrane. It carries out the reaction heme b + (2E,6E)-farnesyl diphosphate + H2O = Fe(II)-heme o + diphosphate. Its pathway is porphyrin-containing compound metabolism; heme O biosynthesis; heme O from protoheme: step 1/1. Converts heme B (protoheme IX) to heme O by substitution of the vinyl group on carbon 2 of heme B porphyrin ring with a hydroxyethyl farnesyl side group. The protein is Protoheme IX farnesyltransferase of Sulfurisphaera tokodaii (strain DSM 16993 / JCM 10545 / NBRC 100140 / 7) (Sulfolobus tokodaii).